Reading from the N-terminus, the 244-residue chain is Lipid A 1-phosphatase (244 aa).

Transmembrane regions (helical) follow at residues 28-48 (LFVTLNAVILSMLLFDAPIGA), 60-80 (ELLTGFGDSAWLIYTSILLFF), 98-118 (ALYVSWIGAYLFFTVVFSGLL), 154-174 (FPSGHSTTVGAFFAAFALLFP), 178-198 (VAFIACAIWLGMTRVMVGAHY), and 201-221 (DVIAGLAFGAWFSLLTAIVFA).

The protein belongs to the lipid A LpxE 1-phosphatase family.

Its subcellular location is the cell inner membrane. Its pathway is bacterial outer membrane biogenesis; LPS lipid A biosynthesis. Its function is as follows. Removes the 1-phosphate group from (tetraacyl) lipid A species, has no requirement for the Kdo(2) moiety of lipid A. Has no 4'-phosphatase activity. Reduces sensitivity of S.meliloti strain 1021 to the cationic antimicrobial peptide (CAMP) polymyxin B. The sequence is that of Lipid A 1-phosphatase from Rhizobium johnstonii (strain DSM 114642 / LMG 32736 / 3841) (Rhizobium leguminosarum bv. viciae).